The chain runs to 238 residues: Large ribosomal subunit protein uL3 (238 aa).

An N5-methylglutamine modification is found at Gln-157.

The protein belongs to the universal ribosomal protein uL3 family. Part of the 50S ribosomal subunit. Forms a cluster with proteins L14 and L19. Post-translationally, methylated by PrmB.

One of the primary rRNA binding proteins, it binds directly near the 3'-end of the 23S rRNA, where it nucleates assembly of the 50S subunit. In Ruthia magnifica subsp. Calyptogena magnifica, this protein is Large ribosomal subunit protein uL3.